A 427-amino-acid polypeptide reads, in one-letter code: Serine--tRNA ligase (427 aa).

T236–E238 lines the L-serine pocket. ATP is bound at residue R267–E269. E290 serves as a coordination point for L-serine. E354–S357 is an ATP binding site. S390 is an L-serine binding site.

Belongs to the class-II aminoacyl-tRNA synthetase family. Type-1 seryl-tRNA synthetase subfamily. Homodimer. The tRNA molecule binds across the dimer.

It localises to the cytoplasm. It catalyses the reaction tRNA(Ser) + L-serine + ATP = L-seryl-tRNA(Ser) + AMP + diphosphate + H(+). The enzyme catalyses tRNA(Sec) + L-serine + ATP = L-seryl-tRNA(Sec) + AMP + diphosphate + H(+). Its pathway is aminoacyl-tRNA biosynthesis; selenocysteinyl-tRNA(Sec) biosynthesis; L-seryl-tRNA(Sec) from L-serine and tRNA(Sec): step 1/1. In terms of biological role, catalyzes the attachment of serine to tRNA(Ser). Is also able to aminoacylate tRNA(Sec) with serine, to form the misacylated tRNA L-seryl-tRNA(Sec), which will be further converted into selenocysteinyl-tRNA(Sec). This chain is Serine--tRNA ligase, found in Rippkaea orientalis (strain PCC 8801 / RF-1) (Cyanothece sp. (strain PCC 8801)).